A 489-amino-acid polypeptide reads, in one-letter code: ATP synthase subunit beta 1 (489 aa).

Residue 159-166 participates in ATP binding; sequence GGAGVGKT. Over residues 465–477 the composition is skewed to basic and acidic residues; it reads EKSKKAAEDKPKA. The tract at residues 465–489 is disordered; the sequence is EKSKKAAEDKPKAEEDEDATSLHDA.

This sequence belongs to the ATPase alpha/beta chains family. F-type ATPases have 2 components, CF(1) - the catalytic core - and CF(0) - the membrane proton channel. CF(1) has five subunits: alpha(3), beta(3), gamma(1), delta(1), epsilon(1). CF(0) has three main subunits: a(1), b(2) and c(9-12). The alpha and beta chains form an alternating ring which encloses part of the gamma chain. CF(1) is attached to CF(0) by a central stalk formed by the gamma and epsilon chains, while a peripheral stalk is formed by the delta and b chains.

Its subcellular location is the cell inner membrane. The catalysed reaction is ATP + H2O + 4 H(+)(in) = ADP + phosphate + 5 H(+)(out). Produces ATP from ADP in the presence of a proton gradient across the membrane. The catalytic sites are hosted primarily by the beta subunits. This is ATP synthase subunit beta 1 from Marinomonas sp. (strain MWYL1).